We begin with the raw amino-acid sequence, 105 residues long: Small ribosomal subunit protein eS24 (105 aa).

Belongs to the eukaryotic ribosomal protein eS24 family.

This Haloquadratum walsbyi (strain DSM 16790 / HBSQ001) protein is Small ribosomal subunit protein eS24.